The sequence spans 262 residues: Virulence regulon transcriptional activator VirF (262 aa).

The HTH araC/xylS-type domain occupies 161-258 (DQIRKIVEKN…GITPKKFYLY (98 aa)). DNA-binding regions (H-T-H motif) lie at residues 178-199 (SDIS…ESEK) and 225-248 (INDV…NEYY).

Homodimer.

Its function is as follows. Primary regulator of plasmid-encoded virulence genes. Activates the transcription of icsA (virG) and of virB, which is an activator of the ipaABCD virulence regulon. In Shigella dysenteriae, this protein is Virulence regulon transcriptional activator VirF (virF).